Consider the following 459-residue polypeptide: Argininosuccinate lyase (459 aa).

The protein belongs to the lyase 1 family. Argininosuccinate lyase subfamily.

It localises to the cytoplasm. The catalysed reaction is 2-(N(omega)-L-arginino)succinate = fumarate + L-arginine. It functions in the pathway amino-acid biosynthesis; L-arginine biosynthesis; L-arginine from L-ornithine and carbamoyl phosphate: step 3/3. This Oceanobacillus iheyensis (strain DSM 14371 / CIP 107618 / JCM 11309 / KCTC 3954 / HTE831) protein is Argininosuccinate lyase.